A 270-amino-acid chain; its full sequence is Phosphonoacetaldehyde hydrolase (270 aa).

Asp11 (nucleophile) is an active-site residue. The Mg(2+) site is built by Asp11 and Ala13. Lys53 (schiff-base intermediate with substrate) is an active-site residue. Asp187 is a Mg(2+) binding site.

This sequence belongs to the HAD-like hydrolase superfamily. PhnX family. In terms of assembly, homodimer. It depends on Mg(2+) as a cofactor.

It carries out the reaction phosphonoacetaldehyde + H2O = acetaldehyde + phosphate + H(+). Its function is as follows. Involved in phosphonate degradation. This is Phosphonoacetaldehyde hydrolase from Salmonella choleraesuis (strain SC-B67).